A 361-amino-acid polypeptide reads, in one-letter code: Transposase A from transposon Tn554 (361 aa).

Positions 23 to 120 (YQLIEPVMKF…VVMSFLDYLS (98 aa)) constitute a Core-binding (CB) domain. The Tyr recombinase domain occupies 163-351 (KQIRTLRSKE…SDQDMKNEFN (189 aa)). Active-site residues include R198, K232, H302, R305, and H328. Y338 (O-(3'-phospho-DNA)-tyrosine intermediate) is an active-site residue.

The protein belongs to the 'phage' integrase family.

One of three proteins encoded by transposon Tn554 required for its transposition. The protein is Transposase A from transposon Tn554 (tnpA1) of Staphylococcus aureus (strain Mu50 / ATCC 700699).